Here is a 130-residue protein sequence, read N- to C-terminus: Small ribosomal subunit protein uS8 (130 aa).

The protein belongs to the universal ribosomal protein uS8 family. Part of the 30S ribosomal subunit. Contacts proteins S5 and S12.

In terms of biological role, one of the primary rRNA binding proteins, it binds directly to 16S rRNA central domain where it helps coordinate assembly of the platform of the 30S subunit. The protein is Small ribosomal subunit protein uS8 of Pseudomonas putida (strain ATCC 700007 / DSM 6899 / JCM 31910 / BCRC 17059 / LMG 24140 / F1).